The primary structure comprises 833 residues: Urease (833 aa).

The Urease domain occupies 395-833; sequence GALDVHVHYI…LPLTRRYFVY (439 aa). The Ni(2+) site is built by histidine 400 and histidine 402. Histidine 402 and alanine 433 together coordinate urea. Ni(2+) is bound at residue lysine 483. An N6-carboxylysine modification is found at lysine 483. Residues histidine 485 and histidine 512 each coordinate urea. Ni(2+) contacts are provided by histidine 512 and histidine 538. Residue histidine 586 is the Proton donor of the active site. Residue aspartate 626 coordinates Ni(2+). Urea is bound at residue alanine 629.

In the C-terminal section; belongs to the metallo-dependent hydrolases superfamily. Urease alpha subunit family. As to quaternary structure, homohexamer. The cofactor is Ni(2+). Carboxylation allows a single lysine to coordinate two nickel ions.

The catalysed reaction is urea + 2 H2O + H(+) = hydrogencarbonate + 2 NH4(+). It functions in the pathway nitrogen metabolism; urea degradation; CO(2) and NH(3) from urea (urease route): step 1/1. The urease accessory proteins URE4, URE6 and URE7 are required for urease activity, URE7 supplying nickel for the functional urease. Its function is as follows. Plays a nutritional role via nitrogen acquisition in the environment. Contributes to the central nervous system invasion by enhancing yeast sequestration within microcapillary beds (such as within the brain) during hematogenous spread, thereby facilitating blood-to-brain invasion by C.neoformans. Affects fitness within the mammalian phagosome, promoting non-lytic exocytosis while delaying intracellular replication and thus reducing phagolysosomal membrane damage, events that could facilitate cryptococcal dissemination when transported inside macrophages. Urease activity is also associated with the regulation of key intracellular metabolic pathways, including melanin biosynthesis, polyamine biosynthesis, as well as intracellular levels of proline and reactive oxygen species. The protein is Urease of Cryptococcus neoformans var. grubii serotype A (strain H99 / ATCC 208821 / CBS 10515 / FGSC 9487) (Filobasidiella neoformans var. grubii).